A 520-amino-acid polypeptide reads, in one-letter code: METKSQNLKDKLYMWYKVRELQSKGLNKTQIGKYLGVDRSTVRRYLRTSREELFRKQNSHREYELKLGKYEEYVRGTLEEYPYISAARMHDWLKECYPDFPRVCDKTVFNFVDRIRRKYGIGKKSEVRIRRDYEKLPETPYGEYAQADFGEKWIPVKNGGSTKVYFFAIVLTRSRYKFIHFSRRPFDTELAIYAHELAFQYFGGRPEKIIYDQDRVLIARENLGDLILTGKFQSFIKEQHFQPVFCRRSDPESKGKVENVVKYVKENFLVARVLQDIPGLNEEARKWLERTGNGKVHGTTRLVPSEEFAVEKGYLKPYYGLPQPPQEQMKEYHVRKDNTVQYRGNYYSLPCGTYRSGQTRVWLQETEGYVELYSKETGKIVARHPLCTRKGKTIYDERHRRPKSIGAQKLAERILVYVSGNREVALWMENLKRKKERYYKDNLEVVLHMMPGYDKDILIEAVHICLDKGIYNGDSVKSLCEHVHRRRNKETETDRTDSCPPRQTGLIQSYNEIFHGYDKT.

One can recognise an HTH IS21-type domain in the interval 13–78; it reads YMWYKVRELQ…KYEEYVRGTL (66 aa). The region spanning 136-312 is the Integrase catalytic domain; it reads LPETPYGEYA…VPSEEFAVEK (177 aa).

It belongs to the transposase IS21/IS408/IS1162 family.

Its function is as follows. Involved in the transposition of the insertion sequence. This chain is Transposase for insertion sequence element IS21-like (tnpA), found in Bacteroides fragilis.